Reading from the N-terminus, the 473-residue chain is Sulfate adenylyltransferase subunit 1 (473 aa).

Positions Lys19 to Glu238 constitute a tr-type G domain. Residues Gly28 to Ser35 are G1. Residue Gly28–Ser35 coordinates GTP. Residues Gly86–Asp90 form a G2 region. Residues Asp107–Gly110 are G3. Residues Asp107–His111 and Asn162–Asp165 each bind GTP. Positions Asn162–Asp165 are G4. A G5 region spans residues Ser200–Leu202.

This sequence belongs to the TRAFAC class translation factor GTPase superfamily. Classic translation factor GTPase family. CysN/NodQ subfamily. In terms of assembly, heterodimer composed of CysD, the smaller subunit, and CysN.

The enzyme catalyses sulfate + ATP + H(+) = adenosine 5'-phosphosulfate + diphosphate. It functions in the pathway sulfur metabolism; hydrogen sulfide biosynthesis; sulfite from sulfate: step 1/3. Its function is as follows. With CysD forms the ATP sulfurylase (ATPS) that catalyzes the adenylation of sulfate producing adenosine 5'-phosphosulfate (APS) and diphosphate, the first enzymatic step in sulfur assimilation pathway. APS synthesis involves the formation of a high-energy phosphoric-sulfuric acid anhydride bond driven by GTP hydrolysis by CysN coupled to ATP hydrolysis by CysD. This is Sulfate adenylyltransferase subunit 1 from Buchnera aphidicola subsp. Acyrthosiphon pisum (strain 5A).